The sequence spans 288 residues: Fibroblast growth factor 2 (288 aa).

Residues Met-1 to Leu-142 constitute a propeptide that is removed on maturation. The disordered stretch occupies residues Met-1–Pro-156. A compositionally biased stretch (basic and acidic residues) spans Glu-72–Arg-84. Omega-N-methylarginine; alternate is present on residues Arg-108, Arg-110, and Arg-112. 3 positions are modified to symmetric dimethylarginine; alternate: Arg-108, Arg-110, and Arg-112. Residues Gly-113–Gly-132 are compositionally biased toward low complexity. Asn-169 contributes to the heparin binding site. The Cell attachment site; atypical signature appears at Asp-179–Arg-181. At Tyr-215 the chain carries Phosphotyrosine; by TEC. Positions Asp-221–Arg-223 match the Cell attachment site; atypical motif. Lys-228 participates in a covalent cross-link: Glycyl lysine isopeptide (Lys-Gly) (interchain with G-Cter in SUMO1). Residues Lys-261–Lys-277 are heparin-binding.

Belongs to the heparin-binding growth factors family. As to quaternary structure, monomer. Homodimer. Interacts with FGFR1, FGFR2, FGFR3 and FGFR4. Affinity between fibroblast growth factors (FGFs) and their receptors is increased by heparan sulfate glycosaminoglycans that function as coreceptors. Interacts with CSPG4, FGFBP1 and TEC. Found in a complex with FGFBP1, FGF1 and FGF2. Interacts with FGFBP3. Interacts with integrin ITGAV:ITGB3; the interaction is required for FGF2 signaling. Interacts with SNORC (via the extracellular domain). Interacts with glypican GPC3. Phosphorylation at Tyr-215 regulates FGF2 unconventional secretion.

It is found in the secreted. It localises to the nucleus. Functionally, acts as a ligand for FGFR1, FGFR2, FGFR3 and FGFR4. Also acts as an integrin ligand which is required for FGF2 signaling. Binds to integrin ITGAV:ITGB3. Plays an important role in the regulation of cell survival, cell division, cell differentiation and cell migration. Functions as a potent mitogen in vitro. Can induce angiogenesis. Mediates phosphorylation of ERK1/2 and thereby promotes retinal lens fiber differentiation. The polypeptide is Fibroblast growth factor 2 (Pan troglodytes (Chimpanzee)).